A 901-amino-acid polypeptide reads, in one-letter code: HTH-type transcriptional regulator MalT (901 aa).

An ATP-binding site is contributed by 39 to 46 (SPAGYGKT). Residues 829 to 894 (ELIRTSPLTQ…AAVQHAQKLL (66 aa)) form the HTH luxR-type domain. Positions 853–872 (NEQIAGELEVAATTIKTHIR) form a DNA-binding region, H-T-H motif.

Belongs to the MalT family. As to quaternary structure, monomer in solution. Oligomerizes to an active state in the presence of the positive effectors ATP and maltotriose.

Activated by ATP and maltotriose, which are both required for DNA binding. Functionally, positively regulates the transcription of the maltose regulon whose gene products are responsible for uptake and catabolism of malto-oligosaccharides. Specifically binds to the promoter region of its target genes, recognizing a short DNA motif called the MalT box. The protein is HTH-type transcriptional regulator MalT of Escherichia coli O7:K1 (strain IAI39 / ExPEC).